Here is a 559-residue protein sequence, read N- to C-terminus: Asparagine--tRNA ligase, cytoplasmic (559 aa).

S72 is subject to Phosphoserine. The interval 82-102 is disordered; sequence HREQMKNDSREKKEAEDNLRR. At K255 the chain carries N6-acetyllysine. Phosphoserine is present on S493. K501 is subject to N6-acetyllysine.

The protein belongs to the class-II aminoacyl-tRNA synthetase family. Homodimer.

The protein localises to the cytoplasm. The catalysed reaction is tRNA(Asn) + L-asparagine + ATP = L-asparaginyl-tRNA(Asn) + AMP + diphosphate + H(+). Functionally, catalyzes the attachment of asparagine to tRNA(Asn) in a two-step reaction: asparagine is first activated by ATP to form Asn-AMP and then transferred to the acceptor end of tRNA(Asn). In addition to its essential role in protein synthesis, acts as a signaling molecule that induced migration of CCR3-expressing cells. Has an essential role in the development of the cerebral cortex, being required for proper proliferation of radial glial cells. This chain is Asparagine--tRNA ligase, cytoplasmic, found in Mus musculus (Mouse).